The following is a 25-amino-acid chain: Small ribosomal subunit protein eS32 (25 aa).

The interval 1–25 (MRAKWRKKRVRRLKRKRRKTRARSK) is disordered.

The protein belongs to the eukaryotic ribosomal protein eS32 family. As to quaternary structure, component of the small ribosomal subunit.

The sequence is that of Small ribosomal subunit protein eS32 (RPL41) from Quercus suber (Cork oak).